Here is an 88-residue protein sequence, read N- to C-terminus: Long neurotoxin 31 (88 aa).

A signal peptide spans 1 to 21; sequence MKTLLLTLVVVTIVCLDLGNS. Cystine bridges form between cysteine 24/cysteine 42, cysteine 35/cysteine 63, cysteine 48/cysteine 52, cysteine 67/cysteine 78, and cysteine 79/cysteine 84.

It belongs to the three-finger toxin family. Long-chain subfamily. Type II alpha-neurotoxin sub-subfamily. In terms of tissue distribution, expressed by the venom gland.

Its subcellular location is the secreted. Its function is as follows. Binds with high affinity to muscular (alpha-1/CHRNA1) and neuronal (alpha-7/CHRNA7) nicotinic acetylcholine receptor (nAChR) and inhibits acetylcholine from binding to the receptor, thereby impairing neuromuscular and neuronal transmission. The polypeptide is Long neurotoxin 31 (Drysdalia coronoides (White-lipped snake)).